We begin with the raw amino-acid sequence, 183 residues long: V-type ATP synthase subunit E (183 aa).

It belongs to the V-ATPase E subunit family.

Functionally, produces ATP from ADP in the presence of a proton gradient across the membrane. The protein is V-type ATP synthase subunit E of Fusobacterium nucleatum subsp. nucleatum (strain ATCC 25586 / DSM 15643 / BCRC 10681 / CIP 101130 / JCM 8532 / KCTC 2640 / LMG 13131 / VPI 4355).